A 325-amino-acid chain; its full sequence is Diaminopimelate epimerase (325 aa).

Substrate is bound by residues Asn-11 and Asn-69. Residue Cys-78 is the Proton donor of the active site. Substrate is bound by residues 79–80 (GN), Asn-166, Asn-203, and 221–222 (ER). Cys-230 functions as the Proton acceptor in the catalytic mechanism. Position 231–232 (231–232 (GT)) interacts with substrate.

It belongs to the diaminopimelate epimerase family. In terms of assembly, homodimer.

It is found in the cytoplasm. The enzyme catalyses (2S,6S)-2,6-diaminopimelate = meso-2,6-diaminopimelate. It functions in the pathway amino-acid biosynthesis; L-lysine biosynthesis via DAP pathway; DL-2,6-diaminopimelate from LL-2,6-diaminopimelate: step 1/1. Its function is as follows. Catalyzes the stereoinversion of LL-2,6-diaminopimelate (L,L-DAP) to meso-diaminopimelate (meso-DAP), a precursor of L-lysine and an essential component of the bacterial peptidoglycan. In Ligilactobacillus salivarius (strain UCC118) (Lactobacillus salivarius), this protein is Diaminopimelate epimerase.